A 428-amino-acid polypeptide reads, in one-letter code: Glycine reductase complex component B subunits alpha and beta (428 aa).

Catalysis depends on Cys242, which acts as the Schiff-base intermediate with substrate; via pyruvic acid. Pyruvic acid (Cys) is present on Cys242.

Heterohexamer of two alpha, two beta and two gamma subunits. Component of the glycine reductase complex, together with components A and C. PB is substrate specific. The peptide chain is cleaved into beta and alpha chains, and the alpha chain N-terminal cysteine is deaminated and oxidized to form a reactive pyruvoyl group.

The enzyme catalyses acetyl phosphate + [thioredoxin]-disulfide + NH4(+) + H2O = [thioredoxin]-dithiol + glycine + phosphate + H(+). In terms of biological role, in the first step of glycine reductase, the substrate is bound to component PB via a Schiff base intermediate. Then the PB-activated substrate is nucleophilically attacked by the selenol anion of component PA to transform it to a carboxymethylated selenoether and the respective amine. By action of component PC, acetyl phosphate is formed, leaving component PA in its oxidized state. Finally component PA becomes reduced by the thioredoxin system to start a new catalytic cycle of reductive deamination. The polypeptide is Glycine reductase complex component B subunits alpha and beta (grdE) (Peptoclostridium acidaminophilum (Eubacterium acidaminophilum)).